A 158-amino-acid polypeptide reads, in one-letter code: Cytochrome c-type biogenesis protein CcmE (158 aa).

Over 1 to 7 (MKPRHRR) the chain is Cytoplasmic. The chain crosses the membrane as a helical; Signal-anchor for type II membrane protein span at residues 8-28 (LTLIALVLGGLGLSAGLALTA). At 29-158 (FQDNLVFFFT…DGHPETTTAY (130 aa)) the chain is on the periplasmic side. Residues His123 and Tyr127 each coordinate heme. The tract at residues 138 to 158 (RIGQGNGTPGPDGHPETTTAY) is disordered.

This sequence belongs to the CcmE/CycJ family.

The protein localises to the cell inner membrane. Heme chaperone required for the biogenesis of c-type cytochromes. Transiently binds heme delivered by CcmC and transfers the heme to apo-cytochromes in a process facilitated by CcmF and CcmH. The polypeptide is Cytochrome c-type biogenesis protein CcmE (Alkalilimnicola ehrlichii (strain ATCC BAA-1101 / DSM 17681 / MLHE-1)).